The primary structure comprises 560 residues: uncharacterized protein (560 aa).

The next 5 membrane-spanning stretches (helical) occupy residues 9–29, 61–81, 136–156, 305–325, and 442–462; these read LVIT…SFLL, ILVP…KYKI, IGIA…ASMM, SLQI…ASFI, and VVLE…TNFY.

It localises to the membrane. This is an uncharacterized protein from Saccharomyces cerevisiae (strain ATCC 204508 / S288c) (Baker's yeast).